Consider the following 418-residue polypeptide: Trans-acting enoyl reductase (418 aa).

The protein belongs to the saccharopine dehydrogenase family. Enoyl reductase subfamily.

Functionally, involved in the reduction of the double bond between C-4 and C-5 during phthiocerol dimycocerosates (DIM A) and glycosylated phenolphthiocerol dimycocerosates (PGL) biosynthesis. In Mycobacterium tuberculosis (strain ATCC 25177 / H37Ra), this protein is Trans-acting enoyl reductase.